The following is a 255-amino-acid chain: Ribonuclease HII (255 aa).

Residues 72–255 form the RNase H type-2 domain; the sequence is AIICGIDEVG…KSFEPIKSLL (184 aa). Residues D78, E79, and D170 each contribute to the a divalent metal cation site.

It belongs to the RNase HII family. It depends on Mn(2+) as a cofactor. Mg(2+) serves as cofactor.

It is found in the cytoplasm. It carries out the reaction Endonucleolytic cleavage to 5'-phosphomonoester.. In terms of biological role, endonuclease that specifically degrades the RNA of RNA-DNA hybrids. This chain is Ribonuclease HII, found in Staphylococcus aureus (strain Mu3 / ATCC 700698).